The chain runs to 765 residues: Phosphoribosylformylglycinamidine synthase subunit PurL (765 aa).

The span at 1–13 (MTVSPTSAPTQAI) shows a compositional bias: polar residues. Residues 1 to 32 (MTVSPTSAPTQAIDTVERAATTPDEPQPFGEL) form a disordered region. The active site involves H65. ATP contacts are provided by Y68 and K112. E114 contacts Mg(2+). Residues 115 to 118 (SHNH) and R137 contribute to the substrate site. H116 serves as the catalytic Proton acceptor. D138 provides a ligand contact to Mg(2+). Q263 serves as a coordination point for substrate. D291 is a binding site for Mg(2+). Substrate is bound at residue 335–337 (ESQ). Positions 523 and 560 each coordinate ATP. N561 is a binding site for Mg(2+). S563 lines the substrate pocket.

It belongs to the FGAMS family. As to quaternary structure, monomer. Part of the FGAM synthase complex composed of 1 PurL, 1 PurQ and 2 PurS subunits.

It localises to the cytoplasm. The catalysed reaction is N(2)-formyl-N(1)-(5-phospho-beta-D-ribosyl)glycinamide + L-glutamine + ATP + H2O = 2-formamido-N(1)-(5-O-phospho-beta-D-ribosyl)acetamidine + L-glutamate + ADP + phosphate + H(+). It participates in purine metabolism; IMP biosynthesis via de novo pathway; 5-amino-1-(5-phospho-D-ribosyl)imidazole from N(2)-formyl-N(1)-(5-phospho-D-ribosyl)glycinamide: step 1/2. In terms of biological role, part of the phosphoribosylformylglycinamidine synthase complex involved in the purines biosynthetic pathway. Catalyzes the ATP-dependent conversion of formylglycinamide ribonucleotide (FGAR) and glutamine to yield formylglycinamidine ribonucleotide (FGAM) and glutamate. The FGAM synthase complex is composed of three subunits. PurQ produces an ammonia molecule by converting glutamine to glutamate. PurL transfers the ammonia molecule to FGAR to form FGAM in an ATP-dependent manner. PurS interacts with PurQ and PurL and is thought to assist in the transfer of the ammonia molecule from PurQ to PurL. The sequence is that of Phosphoribosylformylglycinamidine synthase subunit PurL from Mycolicibacterium paratuberculosis (strain ATCC BAA-968 / K-10) (Mycobacterium paratuberculosis).